The sequence spans 332 residues: Spherulin-4 (332 aa).

Residues 1 to 22 form the signal peptide; the sequence is MNIKIVVLVIFAILLGSALAWH. The interval 26–60 is disordered; that stretch reads HHNPTKAPTEAPHRGGGGGGGHNTPAPTQPPRQNT.

The sequence is that of Spherulin-4 from Physarum polycephalum (Slime mold).